We begin with the raw amino-acid sequence, 422 residues long: UDP-N-acetylglucosamine 1-carboxyvinyltransferase (422 aa).

24 to 25 is a binding site for phosphoenolpyruvate; that stretch reads KN. Arg-93 serves as a coordination point for UDP-N-acetyl-alpha-D-glucosamine. Cys-117 acts as the Proton donor in catalysis. Cys-117 carries the 2-(S-cysteinyl)pyruvic acid O-phosphothioketal modification. UDP-N-acetyl-alpha-D-glucosamine is bound by residues 122-126, 162-165, Asp-307, and Ile-329; these read RPVDL and KVSV.

It belongs to the EPSP synthase family. MurA subfamily.

The protein localises to the cytoplasm. It carries out the reaction phosphoenolpyruvate + UDP-N-acetyl-alpha-D-glucosamine = UDP-N-acetyl-3-O-(1-carboxyvinyl)-alpha-D-glucosamine + phosphate. The protein operates within cell wall biogenesis; peptidoglycan biosynthesis. Its function is as follows. Cell wall formation. Adds enolpyruvyl to UDP-N-acetylglucosamine. The chain is UDP-N-acetylglucosamine 1-carboxyvinyltransferase from Vibrio atlanticus (strain LGP32) (Vibrio splendidus (strain Mel32)).